The sequence spans 697 residues: uncharacterized protein (697 aa).

The next 5 membrane-spanning stretches (helical) occupy residues 45-65 (LCAV…LALL), 86-106 (TVAA…MGVV), 128-148 (VVVS…GMLA), 198-218 (VLLG…WWAL), and 280-300 (HLAI…ILAG). ABC transporter domains are found at residues 251–473 (VRLD…QPQH) and 477–696 (LELV…AGGM). ATP is bound by residues 285-292 (GANGSGKT) and 514-521 (GGNGSGKS). Residues 522 to 542 (TLAWIMAGLTIPTTGACLLDG) traverse the membrane as a helical segment.

It belongs to the ABC transporter superfamily.

The protein resides in the cell membrane. This is an uncharacterized protein from Mycobacterium tuberculosis (strain CDC 1551 / Oshkosh).